The primary structure comprises 273 residues: 2,3,4,5-tetrahydropyridine-2,6-dicarboxylate N-succinyltransferase (273 aa).

Substrate is bound by residues R104 and D141.

This sequence belongs to the transferase hexapeptide repeat family. In terms of assembly, homotrimer.

Its subcellular location is the cytoplasm. It carries out the reaction (S)-2,3,4,5-tetrahydrodipicolinate + succinyl-CoA + H2O = (S)-2-succinylamino-6-oxoheptanedioate + CoA. Its pathway is amino-acid biosynthesis; L-lysine biosynthesis via DAP pathway; LL-2,6-diaminopimelate from (S)-tetrahydrodipicolinate (succinylase route): step 1/3. The sequence is that of 2,3,4,5-tetrahydropyridine-2,6-dicarboxylate N-succinyltransferase from Laribacter hongkongensis (strain HLHK9).